A 595-amino-acid polypeptide reads, in one-letter code: MLHTINYRSWHLAARQLGRSTFRKFTTESSTKSPIADVCFAFDSIDGVLIRGGRGLKEGTKTLKFLQKNNIPFILLTNGGGMHESVRAQRLSKTLSVSLTEDDFCQSHTPFRALADKYKHVLVLGGKDNSVRETAEKYGFKSVINELDVIAKLGTPFWPFTSFNEEDIKDAKDFDVTRPIEAVFTYVDPVRLGLDLQLVMELGQSKNGVLGTVSKTANEGPDIYFSNADLIWPNEYPLPRLGQGAFAICCESVFKELTGKDLRNTKYGKPHKLTYDYAKNILMKKHKTLGITNPPKEIFMVGDNPESDIRGANNYGWTSILVRTGIFQGDNSPKYSAKHVSDNVWEGVRWALSKHVPAAKLNKSMGEVRGFHTSSRVLNTVTKSNNSKPIQRPLRENIFTLPNLLTFSRLLSAPLIAYLYIYDYTKAAACFFLYAGFTDLVDGYIARKFDLGSIAGTVLDPLADKTLMTCLTICLAVRETMPLTLASLIIGRDVLLVSAVSYLRYKSLPAPKTFRRFFDFAIPTTELKPTRISKWNTALQLLLLGLLITEPILPFDASFAKSPLFYIVGCTTIASGASYCISRNTFRNIGKSKLQ.

The N-terminal 24 residues, 1–24, are a transit peptide targeting the mitochondrion; sequence MLHTINYRSWHLAARQLGRSTFRK. Transmembrane regions (helical) follow at residues 538–560 and 564–586; these read ALQLLLLGLLITEPILPFDASFA and LFYIVGCTTIASGASYCISRNTF.

In the N-terminal section; belongs to the HAD-like hydrolase superfamily. It in the C-terminal section; belongs to the CDP-alcohol phosphatidyltransferase class-I family. Mg(2+) is required as a cofactor. Post-translationally, proteolytically cleaved, presumably during its import into the mitochondrion by mitochondrial processing peptidase.

Its subcellular location is the mitochondrion. It localises to the mitochondrion inner membrane. The catalysed reaction is a CDP-1,2-diacyl-sn-glycerol + a 1,2-diacyl-sn-glycero-3-phospho-(1'-sn-glycerol) = a cardiolipin + CMP + H(+). Functionally, catalyzes the synthesis of cardiolipin (CL) (diphosphatidylglycerol) by specifically transferring a phosphatidyl group from CDP-diacylglycerol to phosphatidylglycerol (PG). CL is a key phospholipid in mitochondrial membranes and plays important roles in maintaining the functional integrity and dynamics of mitochondria under both optimal and stress conditions. Activity is dispensable for viability. In Schizosaccharomyces pombe (strain 972 / ATCC 24843) (Fission yeast), this protein is Cardiolipin synthase (CMP-forming) / mitochondrial hydrolase fusion protein.